A 479-amino-acid polypeptide reads, in one-letter code: Probable acyl-CoA desaturase (479 aa).

Residues 1 to 18 (MTAPSATAFSSATTQPTT) show a composition bias toward low complexity. The tract at residues 1–28 (MTAPSATAFSSATTQPTTEGNASMRKRT) is disordered. Over 1 to 61 (MTAPSATAFS…PWTMQNWWRH (61 aa)) the chain is Cytoplasmic. A helical membrane pass occupies residues 62–82 (LNWLHCMLIFGLPMIAIYGVF). Over 83–89 (TTPLQTK) the chain is Lumenal. The helical transmembrane segment at 90–110 (TLIFAIIYYAYSGLGITAGYH) threads the bilayer. Positions 110, 115, 147, 150, and 151 each coordinate Fe cation. Residues 110 to 115 (HRLWSH) carry the Histidine box-1 motif. The Cytoplasmic portion of the chain corresponds to 111–204 (RLWSHRAYKA…DPFVMFNHRH (94 aa)). The Histidine box-2 motif lies at 147-151 (HRAHH). A helical transmembrane segment spans residues 205-225 (FLPIASFMAFIFPSLFCGLLW). Over 226–229 (GDYR) the chain is Lumenal. Residues 230–250 (GGYFYAGVCRLVFVHHATFCV) form a helical membrane-spanning segment. Over 251–479 (NSLAHLIGSQ…QPPIEAAAAN (229 aa)) the chain is Cytoplasmic. Positions 255, 284, 287, and 288 each coordinate Fe cation. The short motif at 284–288 (HNYHH) is the Histidine box-3 element. Residues 357–433 (QLPVMEFEDF…LSTYRVAVVR (77 aa)) enclose the Cytochrome b5 heme-binding domain. Residues His390 and His416 each contribute to the heme site.

The protein belongs to the fatty acid desaturase type 1 family. The cofactor is Fe(2+).

It localises to the membrane. It catalyses the reaction octadecanoyl-CoA + 2 Fe(II)-[cytochrome b5] + O2 + 2 H(+) = (9Z)-octadecenoyl-CoA + 2 Fe(III)-[cytochrome b5] + 2 H2O. Its function is as follows. Stearoyl-CoA desaturase that utilizes O(2) and electrons from reduced cytochrome b5 to introduce the first double bond into saturated fatty acyl-CoA substrates. Catalyzes the insertion of a cis double bond at the delta-9 position into fatty acyl-CoA substrates including palmitoyl-CoA and stearoyl-CoA. Contributes to the biosynthesis of membrane phospholipids, cholesterol esters and triglycerides. The chain is Probable acyl-CoA desaturase from Schizosaccharomyces pombe (strain 972 / ATCC 24843) (Fission yeast).